The primary structure comprises 376 residues: NAD(P)H-quinone oxidoreductase subunit 1, chloroplastic (376 aa).

A run of 9 helical transmembrane segments spans residues 27 to 47, 65 to 85, 97 to 117, 130 to 150, 166 to 186, 251 to 271, 272 to 292, 310 to 330, and 353 to 373; these read LISIFLPIVLLLVISVLGVLV, PEYAGSLGIMQAIVDGVKLLI, WLFSIGPVLVVTPVILSYLVV, LGIFFWIVISSITPLGLLIAG, AAQSISYEIPLTLCVLSISLL, GIKFGIFYVASYLNLLVSSLF, AVVLYLGGWNFPIPTTLIFFI, LIIPIIHISITLAKTYLFIFF, and FLLPMAVGNLLLTASFQLTLF.

It belongs to the complex I subunit 1 family. NDH is composed of at least 16 different subunits, 5 of which are encoded in the nucleus.

It is found in the plastid. The protein resides in the chloroplast thylakoid membrane. The enzyme catalyses a plastoquinone + NADH + (n+1) H(+)(in) = a plastoquinol + NAD(+) + n H(+)(out). It catalyses the reaction a plastoquinone + NADPH + (n+1) H(+)(in) = a plastoquinol + NADP(+) + n H(+)(out). Its function is as follows. NDH shuttles electrons from NAD(P)H:plastoquinone, via FMN and iron-sulfur (Fe-S) centers, to quinones in the photosynthetic chain and possibly in a chloroplast respiratory chain. The immediate electron acceptor for the enzyme in this species is believed to be plastoquinone. Couples the redox reaction to proton translocation, and thus conserves the redox energy in a proton gradient. The chain is NAD(P)H-quinone oxidoreductase subunit 1, chloroplastic from Chara vulgaris (Common stonewort).